We begin with the raw amino-acid sequence, 218 residues long: Ribose-5-phosphate isomerase A (218 aa).

Substrate-binding positions include Thr-28–Thr-31, Asp-81–Asp-84, and Lys-94–Gly-97. Glu-103 acts as the Proton acceptor in catalysis. Lys-121 is a substrate binding site.

This sequence belongs to the ribose 5-phosphate isomerase family. In terms of assembly, homodimer.

It catalyses the reaction aldehydo-D-ribose 5-phosphate = D-ribulose 5-phosphate. It functions in the pathway carbohydrate degradation; pentose phosphate pathway; D-ribose 5-phosphate from D-ribulose 5-phosphate (non-oxidative stage): step 1/1. Catalyzes the reversible conversion of ribose-5-phosphate to ribulose 5-phosphate. This chain is Ribose-5-phosphate isomerase A, found in Vibrio vulnificus (strain CMCP6).